The sequence spans 91 residues: Class I hydrophobin 3 (91 aa).

Positions 1-17 (MLFRLFTIPSIALGVLG) are cleaved as a signal peptide. 4 cysteine pairs are disulfide-bonded: Cys-31–Cys-70, Cys-35–Cys-61, Cys-36–Cys-53, and Cys-71–Cys-87.

This sequence belongs to the fungal hydrophobin family. As to quaternary structure, self-assembles to form functional amyloid fibrils called rodlets. Self-assembly into fibrillar rodlets occurs spontaneously at hydrophobic:hydrophilic interfaces and the rodlets further associate laterally to form amphipathic monolayers. As to expression, expressed in conidia.

The protein resides in the secreted. It is found in the cell wall. Its function is as follows. Aerial growth, conidiation, and dispersal of filamentous fungi in the environment rely upon a capability of their secreting small amphipathic proteins called hydrophobins (HPBs) with low sequence identity. Class I can self-assemble into an outermost layer of rodlet bundles on aerial cell surfaces, conferring cellular hydrophobicity that supports fungal growth, development and dispersal; whereas Class II form highly ordered films at water-air interfaces through intermolecular interactions but contribute nothing to the rodlet structure. HYD3 is a class I hydrophobin located on the conidial surface that activates specifically the humoral and cellular immunity of Metarhizium acridum's own host insect, Locusta migratoria manilensis (Meyen) but not that of other non-host insects. Improves the resistance of locusts to both specialist and generalist fungal pathogens (wide host range) when topically applied to the cuticle, but has no effect on the fungal resistance of other insects, including Spodoptera frugiperda and Galleria mellonella. In Metarhizium acridum (strain CQMa 102), this protein is Class I hydrophobin 3.